The following is a 475-amino-acid chain: Tubulin gamma-1 chain (475 aa).

142 to 148 (AGGTGSG) provides a ligand contact to GTP. Residues 453–475 (VKRGNGPVDSKSEDSRSVTSAGS) form a disordered region.

This sequence belongs to the tubulin family. As to quaternary structure, interacts with Ote.

It localises to the cytoplasm. The protein localises to the cytoskeleton. It is found in the microtubule organizing center. Its subcellular location is the centrosome. The protein resides in the perinuclear region. Its function is as follows. Tubulin is the major constituent of microtubules. The gamma chain is found at microtubule organizing centers (MTOC) such as the spindle poles or the centrosome, suggesting that it is involved in the minus-end nucleation of microtubule assembly. This chain is Tubulin gamma-1 chain (gammaTub23C), found in Drosophila melanogaster (Fruit fly).